A 279-amino-acid polypeptide reads, in one-letter code: Indole-3-glycerol phosphate synthase (279 aa).

This sequence belongs to the TrpC family.

The enzyme catalyses 1-(2-carboxyphenylamino)-1-deoxy-D-ribulose 5-phosphate + H(+) = (1S,2R)-1-C-(indol-3-yl)glycerol 3-phosphate + CO2 + H2O. It participates in amino-acid biosynthesis; L-tryptophan biosynthesis; L-tryptophan from chorismate: step 4/5. This Ectopseudomonas mendocina (strain ymp) (Pseudomonas mendocina) protein is Indole-3-glycerol phosphate synthase.